The sequence spans 446 residues: Tol-Pal system protein TolB (446 aa).

The first 36 residues, 1 to 36 (MMDVQTVRRGNAVQSLMSKLILPLVMAVAFALPARA), serve as a signal peptide directing secretion. Residues 424–446 (GYNERPSPTPTFASDPAWSPRIQ) are disordered.

It belongs to the TolB family. As to quaternary structure, the Tol-Pal system is composed of five core proteins: the inner membrane proteins TolA, TolQ and TolR, the periplasmic protein TolB and the outer membrane protein Pal. They form a network linking the inner and outer membranes and the peptidoglycan layer.

The protein resides in the periplasm. In terms of biological role, part of the Tol-Pal system, which plays a role in outer membrane invagination during cell division and is important for maintaining outer membrane integrity. The protein is Tol-Pal system protein TolB of Parvibaculum lavamentivorans (strain DS-1 / DSM 13023 / NCIMB 13966).